Reading from the N-terminus, the 135-residue chain is Small ribosomal subunit protein uS12 (135 aa).

Asp-89 bears the 3-methylthioaspartic acid mark. The segment at 101-135 is disordered; that stretch reads SLDTSGVADRKQSRSKYGAKQPKAGAAAPVKGKRR. The span at 116-135 shows a compositional bias: low complexity; it reads KYGAKQPKAGAAAPVKGKRR.

Belongs to the universal ribosomal protein uS12 family. As to quaternary structure, part of the 30S ribosomal subunit. Contacts proteins S8 and S17. May interact with IF1 in the 30S initiation complex.

In terms of biological role, with S4 and S5 plays an important role in translational accuracy. Interacts with and stabilizes bases of the 16S rRNA that are involved in tRNA selection in the A site and with the mRNA backbone. Located at the interface of the 30S and 50S subunits, it traverses the body of the 30S subunit contacting proteins on the other side and probably holding the rRNA structure together. The combined cluster of proteins S8, S12 and S17 appears to hold together the shoulder and platform of the 30S subunit. This is Small ribosomal subunit protein uS12 from Chlorobium phaeobacteroides (strain DSM 266 / SMG 266 / 2430).